The following is a 259-amino-acid chain: Glucose-1-phosphate thymidylyltransferase (259 aa).

Belongs to the inositol monophosphatase superfamily.

It catalyses the reaction dTTP + alpha-D-glucose 1-phosphate + H(+) = dTDP-alpha-D-glucose + diphosphate. It functions in the pathway antibiotic biosynthesis; streptomycin biosynthesis. This Streptomyces griseus protein is Glucose-1-phosphate thymidylyltransferase (strO).